The following is a 496-amino-acid chain: Beta-amylase (496 aa).

The substrate site is built by aspartate 54, histidine 94, and aspartate 102. Glutamate 187 (proton donor) is an active-site residue. Lysine 296, histidine 301, and threonine 343 together coordinate substrate. The active-site Proton acceptor is glutamate 381. Residues 382–383 (NA) and arginine 421 each bind substrate. The tract at residues 455 to 496 (YNHGIPPLKRSGPKIPDDVLNEATKPIPPFPWDSETDMKVDG) is disordered.

It belongs to the glycosyl hydrolase 14 family.

The catalysed reaction is Hydrolysis of (1-&gt;4)-alpha-D-glucosidic linkages in polysaccharides so as to remove successive maltose units from the non-reducing ends of the chains.. The polypeptide is Beta-amylase (BMY1) (Medicago sativa (Alfalfa)).